A 2499-amino-acid chain; its full sequence is Probable polyketide synthase 22 (2499 aa).

Positions 11–430 (DNQVAIVGLG…GSNACVLLSE (420 aa)) constitute a Ketosynthase family 3 (KS3) domain. Residues C177, H316, and H354 each act as for beta-ketoacyl synthase activity in the active site. Positions 623-656 (GITPSIIVGHSLGEVASAFCSGMIDLETACFVIY) are acyl/malonyl transferases. S633 (for acyl/malonyl transferase activity) is an active-site residue. Residues 922–1044 (APINQLGNKN…SRILMKSLDV (123 aa)) form an N-terminal hotdog fold region. The PKS/mFAS DH domain occupies 922 to 1209 (APINQLGNKN…IASTLSTKSE (288 aa)). Residue H956 is the Proton acceptor; for dehydratase activity of the active site. Residues 1059 to 1209 (NWSTLKREQL…IASTLSTKSE (151 aa)) are C-terminal hotdog fold. D1121 serves as the catalytic Proton donor; for dehydratase activity. Residues 2414 to 2491 (EKEFSIRQDI…QIINIVTTKV (78 aa)) form the Carrier domain. An O-(pantetheine 4'-phosphoryl)serine modification is found at S2451.

Pantetheine 4'-phosphate serves as cofactor.

Functionally, probable polyketide synthase. In Dictyostelium discoideum (Social amoeba), this protein is Probable polyketide synthase 22 (pks22).